The sequence spans 178 residues: Large ribosomal subunit protein bL25 (178 aa).

This sequence belongs to the bacterial ribosomal protein bL25 family. CTC subfamily. In terms of assembly, part of the 50S ribosomal subunit; part of the 5S rRNA/L5/L18/L25 subcomplex. Contacts the 5S rRNA. Binds to the 5S rRNA independently of L5 and L18.

Functionally, this is one of the proteins that binds to the 5S RNA in the ribosome where it forms part of the central protuberance. The protein is Large ribosomal subunit protein bL25 of Helicobacter pylori (strain J99 / ATCC 700824) (Campylobacter pylori J99).